We begin with the raw amino-acid sequence, 485 residues long: UDP-N-acetylmuramate--L-alanine ligase (485 aa).

Position 120–126 (120–126 (GSHGKTT)) interacts with ATP.

The protein belongs to the MurCDEF family.

It is found in the cytoplasm. It catalyses the reaction UDP-N-acetyl-alpha-D-muramate + L-alanine + ATP = UDP-N-acetyl-alpha-D-muramoyl-L-alanine + ADP + phosphate + H(+). Its pathway is cell wall biogenesis; peptidoglycan biosynthesis. Cell wall formation. This is UDP-N-acetylmuramate--L-alanine ligase from Rickettsia peacockii (strain Rustic).